A 365-amino-acid chain; its full sequence is tRNA-specific 2-thiouridylase MnmA (365 aa).

ATP-binding positions include Ala-14 to Ser-21 and Leu-40. The Nucleophile role is filled by Cys-108. Cysteines 108 and 204 form a disulfide. Gly-132 contacts ATP. Positions Lys-154–Gln-156 are interaction with tRNA. Residue Cys-204 is the Cysteine persulfide intermediate of the active site.

The protein belongs to the MnmA/TRMU family.

It is found in the cytoplasm. The catalysed reaction is S-sulfanyl-L-cysteinyl-[protein] + uridine(34) in tRNA + AH2 + ATP = 2-thiouridine(34) in tRNA + L-cysteinyl-[protein] + A + AMP + diphosphate + H(+). Its function is as follows. Catalyzes the 2-thiolation of uridine at the wobble position (U34) of tRNA, leading to the formation of s(2)U34. In Rickettsia massiliae (strain Mtu5), this protein is tRNA-specific 2-thiouridylase MnmA.